A 382-amino-acid chain; its full sequence is Proton extrusion protein PxcA (382 aa).

A run of 4 helical transmembrane segments spans residues 156-176 (TLIS…VQQI), 257-277 (AIKN…VCII), 305-325 (IILF…QVLL), and 340-360 (FILL…KYWI).

Belongs to the CemA family.

The protein resides in the cell inner membrane. Its function is as follows. Required for H(+) efflux immediately after light irradiation to form a rapid H(+) concentration gradient across the thylakoid membranes. Together with PxcL, contributes to transient H(+) uptake following dark to light transition. The sequence is that of Proton extrusion protein PxcA from Prochlorococcus marinus (strain MIT 9313).